The sequence spans 325 residues: ATP phosphoribosyltransferase (325 aa).

Belongs to the ATP phosphoribosyltransferase family. Long subfamily. Mg(2+) serves as cofactor.

Its subcellular location is the cytoplasm. The catalysed reaction is 1-(5-phospho-beta-D-ribosyl)-ATP + diphosphate = 5-phospho-alpha-D-ribose 1-diphosphate + ATP. The protein operates within amino-acid biosynthesis; L-histidine biosynthesis; L-histidine from 5-phospho-alpha-D-ribose 1-diphosphate: step 1/9. With respect to regulation, feedback inhibited by histidine. Catalyzes the condensation of ATP and 5-phosphoribose 1-diphosphate to form N'-(5'-phosphoribosyl)-ATP (PR-ATP). Has a crucial role in the pathway because the rate of histidine biosynthesis seems to be controlled primarily by regulation of HisG enzymatic activity. This Nitrobacter hamburgensis (strain DSM 10229 / NCIMB 13809 / X14) protein is ATP phosphoribosyltransferase.